The following is a 115-amino-acid chain: Non-specific lipid-transfer protein 4.1 (115 aa).

The N-terminal stretch at 1–25 (MARAAASQLVLVALVAAMLLVAADA) is a signal peptide. Disulfide bonds link Cys29–Cys77, Cys39–Cys54, Cys55–Cys97, and Cys75–Cys111.

The protein belongs to the plant LTP family.

Plant non-specific lipid-transfer proteins transfer phospholipids as well as galactolipids across membranes. May play a role in wax or cutin deposition in the cell walls of expanding epidermal cells and certain secretory tissues. This Hordeum vulgare (Barley) protein is Non-specific lipid-transfer protein 4.1 (LTP4.1).